A 178-amino-acid polypeptide reads, in one-letter code: ATP-dependent protease subunit HslV (178 aa).

Thr7 is an active-site residue. Residues Gly162, Cys165, and Thr168 each coordinate Na(+).

This sequence belongs to the peptidase T1B family. HslV subfamily. A double ring-shaped homohexamer of HslV is capped on each side by a ring-shaped HslU homohexamer. The assembly of the HslU/HslV complex is dependent on binding of ATP.

The protein localises to the cytoplasm. The enzyme catalyses ATP-dependent cleavage of peptide bonds with broad specificity.. Allosterically activated by HslU binding. Functionally, protease subunit of a proteasome-like degradation complex believed to be a general protein degrading machinery. The protein is ATP-dependent protease subunit HslV of Burkholderia cenocepacia (strain ATCC BAA-245 / DSM 16553 / LMG 16656 / NCTC 13227 / J2315 / CF5610) (Burkholderia cepacia (strain J2315)).